A 386-amino-acid polypeptide reads, in one-letter code: Manganese dependent endoglucanase Eg5A (386 aa).

The N-terminal stretch at 1-17 is a signal peptide; it reads MLKYASIALALATLGVA. The CBM1 domain maps to 18 to 53; it reads QQQQWGQCGGIGWTGATTCVAGSVCSVLNPYYSQCI. Glu-209 serves as the catalytic Proton donor. Glu-319 (nucleophile) is an active-site residue. N-linked (GlcNAc...) asparagine glycosylation is present at Asn-324.

It belongs to the glycosyl hydrolase 5 (cellulase A) family. Mn(2+) is required as a cofactor.

Its subcellular location is the secreted. The catalysed reaction is Endohydrolysis of (1-&gt;4)-beta-D-glucosidic linkages in cellulose, lichenin and cereal beta-D-glucans.. Secreted manganese dependent endoglucanase that acts by cleaving the beta-1,4-glucose linkage. Exhibits high activity toward carboxymethyl-cellulose (CMC), barley glucan, and glucomannan. Displays low activity on larminarin and xyloglucan but does not hydrolyze hemicellulose substrates such as birchwood xylan, arabinoxylan, and arabinan. This chain is Manganese dependent endoglucanase Eg5A, found in Phanerodontia chrysosporium (White-rot fungus).